Reading from the N-terminus, the 433-residue chain is MTIKNSFLEYRMTELTQQIEKSTWHSKFAALGPGILMASAAVGGSHIIASTQSGAIYGWQLAIIIILANLFKYPFFRFGVQYTLDSGETLLQGYLRKGKLYIWIFFLLNVFATVINTAAVGLLCAAILTFVLPVQVPVPTLSFIVIGVSTSILLLGKYRLLDGLSKLIMIALTITTVSAVIIALARNGIQGVAPADYVSASPWNLAALGFIVALMGWMPAPIEISAINSMWVIAKRRVSKVSYQDGIWDFNVGYIGTAILALVFLALGALVQHGSSETVQLVGGKYIAQLINMYASTIGEWARGLIAFIAFMCMFGTTITVIDGYSRTNVESLRLILGKKESRPSYLNVAITFAALAGLAIIFYFNNAVGPMLKFAMIASFVSTPVFAYLNLSLVLKGEHRVKGKLLWLSLIGLMYLTSFTLLFIAQQAGWLN.

11 helical membrane-spanning segments follow: residues 28-48 (FAAL…SHII), 56-76 (IYGW…YPFF), 102-122 (IWIF…AVGL), 126-146 (AILT…FIVI), 164-184 (LSKL…IIAL), 207-227 (ALGF…ISAI), 250-270 (FNVG…LGAL), 304-324 (GLIA…VIDG), 345-365 (SYLN…IFYF), 375-395 (FAMI…LSLV), and 406-426 (LLWL…LFIA).

The protein resides in the cell membrane. This is an uncharacterized protein from Pasteurella multocida (strain Pm70).